Reading from the N-terminus, the 351-residue chain is MGMLVPLISKISDLSEEAKACVAACSSVEELDEVRGRYIGRAGALTALLRQISTIQDMDERKAVGSAANAACAALKLAIQDRESQLAREQLHSRLASERIDVTLPARPRTCGKIHPISGVIREISSILSELGFAVVHGPELEDEFHVFDALNTPEHHPARAENDTFYMTKRLNGRRVVLRTHTSSMQIRAMESNPNPPIKIISPGRVYRNDWDATHSPVFHQVEGLFVDKHVTMGHLKYCINYFLSRFFARKVETRMRASFFPFTEPSAEIDVKDRHQKWVEVLGCGMVHPAVLENVNIDPEKYRGFAFGMGVERMAMLKYGITDLRNFYSNKLEWLNHYGFCFTDILGRA.

E266 contributes to the Mg(2+) binding site.

It belongs to the class-II aminoacyl-tRNA synthetase family. Phe-tRNA synthetase alpha subunit type 1 subfamily. In terms of assembly, tetramer of two alpha and two beta subunits. The cofactor is Mg(2+).

The protein localises to the cytoplasm. It catalyses the reaction tRNA(Phe) + L-phenylalanine + ATP = L-phenylalanyl-tRNA(Phe) + AMP + diphosphate + H(+). In Anaplasma marginale (strain St. Maries), this protein is Phenylalanine--tRNA ligase alpha subunit.